The primary structure comprises 165 residues: uncharacterized protein (165 aa).

One can recognise an N-acetyltransferase domain in the interval 8–159; the sequence is LLVNYKTLEE…QGVQEQTTKP (152 aa).

This is an uncharacterized protein from Shouchella clausii (strain KSM-K16) (Alkalihalobacillus clausii).